Here is a 120-residue protein sequence, read N- to C-terminus: NAD(P)H-quinone oxidoreductase subunit 3 (120 aa).

Transmembrane regions (helical) follow at residues 6 to 26 (GYDA…LALV), 64 to 84 (MFAL…PWAV), and 89 to 109 (LGLL…VALA).

This sequence belongs to the complex I subunit 3 family. NDH-1 can be composed of about 15 different subunits; different subcomplexes with different compositions have been identified which probably have different functions.

It is found in the cellular thylakoid membrane. It catalyses the reaction a plastoquinone + NADH + (n+1) H(+)(in) = a plastoquinol + NAD(+) + n H(+)(out). The catalysed reaction is a plastoquinone + NADPH + (n+1) H(+)(in) = a plastoquinol + NADP(+) + n H(+)(out). NDH-1 shuttles electrons from an unknown electron donor, via FMN and iron-sulfur (Fe-S) centers, to quinones in the respiratory and/or the photosynthetic chain. The immediate electron acceptor for the enzyme in this species is believed to be plastoquinone. Couples the redox reaction to proton translocation, and thus conserves the redox energy in a proton gradient. Cyanobacterial NDH-1 also plays a role in inorganic carbon-concentration. The chain is NAD(P)H-quinone oxidoreductase subunit 3 from Synechococcus sp. (strain WH7803).